The primary structure comprises 557 residues: Aspartate--tRNA ligase, cytoplasmic (557 aa).

The span at 1-12 (MSQDENIVKAVE) shows a compositional bias: basic and acidic residues. The segment at 1–74 (MSQDENIVKA…AAAEDTAKDN (74 aa)) is disordered. Ser2 is modified (N-acetylserine). Ser14 is subject to Phosphoserine. The segment covering 37-74 (LQKEQEKQRKKEERALQLEAEREAREKKAAAEDTAKDN) has biased composition (basic and acidic residues). Glu281 is a binding site for L-aspartate. Ser301 carries the post-translational modification Phosphoserine. The interval 303 to 306 (QFNK) is aspartate. Arg325 is an L-aspartate binding site. Residues 325–327 (RAE), 333–335 (RHM), and Glu478 contribute to the ATP site. Residues Ser481 and Arg485 each contribute to the L-aspartate site. Ser502 carries the post-translational modification Phosphoserine. 528–531 (GLER) provides a ligand contact to ATP. Ser546 is subject to Phosphoserine.

Belongs to the class-II aminoacyl-tRNA synthetase family. Type 2 subfamily. As to quaternary structure, homodimer.

Its subcellular location is the cytoplasm. The enzyme catalyses tRNA(Asp) + L-aspartate + ATP = L-aspartyl-tRNA(Asp) + AMP + diphosphate. The protein is Aspartate--tRNA ligase, cytoplasmic (DPS1) of Saccharomyces cerevisiae (strain ATCC 204508 / S288c) (Baker's yeast).